Here is a 256-residue protein sequence, read N- to C-terminus: Thiazole synthase (256 aa).

Residue lysine 96 is the Schiff-base intermediate with DXP of the active site. 1-deoxy-D-xylulose 5-phosphate contacts are provided by residues glycine 157, 183-184 (AG), and 205-206 (NT).

This sequence belongs to the ThiG family. In terms of assembly, homotetramer. Forms heterodimers with either ThiH or ThiS.

It localises to the cytoplasm. The catalysed reaction is [ThiS sulfur-carrier protein]-C-terminal-Gly-aminoethanethioate + 2-iminoacetate + 1-deoxy-D-xylulose 5-phosphate = [ThiS sulfur-carrier protein]-C-terminal Gly-Gly + 2-[(2R,5Z)-2-carboxy-4-methylthiazol-5(2H)-ylidene]ethyl phosphate + 2 H2O + H(+). The protein operates within cofactor biosynthesis; thiamine diphosphate biosynthesis. Catalyzes the rearrangement of 1-deoxy-D-xylulose 5-phosphate (DXP) to produce the thiazole phosphate moiety of thiamine. Sulfur is provided by the thiocarboxylate moiety of the carrier protein ThiS. In vitro, sulfur can be provided by H(2)S. The chain is Thiazole synthase from Bacillus anthracis.